The chain runs to 125 residues: 17 kDa gas vesicle protein (125 aa).

It belongs to the gas vesicle GvpC family.

It is found in the gas vesicle. In terms of biological role, gas vesicles (GV) are hollow, gas filled proteinaceous nanostructures. During planktonic growth they allow positioning of the organism at a favorable depth for light or nutrient acquisition. The sequence is that of 17 kDa gas vesicle protein from Dactylococcopsis salina (strain PCC 8305) (Myxobactron salinum).